The sequence spans 124 residues: Fluoride-specific ion channel FluC 2 (124 aa).

4 helical membrane passes run 9 to 29 (LGIFLAAMLGGLVRYLVSTWL), 34 to 54 (DFPWGTLFVNYLGIFCLIFLV), 67 to 87 (LILALGTGFCGGLTTFSSLML), and 99 to 119 (FSLVLYLLLSIGGGLLLAYFL). Residues glycine 77 and threonine 80 each contribute to the Na(+) site.

The protein belongs to the fluoride channel Fluc/FEX (TC 1.A.43) family.

The protein resides in the cell membrane. It carries out the reaction fluoride(in) = fluoride(out). Na(+) is not transported, but it plays an essential structural role and its presence is essential for fluoride channel function. In terms of biological role, fluoride-specific ion channel. Important for reducing fluoride concentration in the cell, thus reducing its toxicity. This is Fluoride-specific ion channel FluC 2 from Streptococcus pneumoniae (strain ATCC BAA-255 / R6).